A 462-amino-acid polypeptide reads, in one-letter code: Dipeptidyl peptidase 1 (462 aa).

An N-terminal signal peptide occupies residues 1–24 (MGPWTHSLRAALLLVLLGVCTVSS). N29 and N53 each carry an N-linked (GlcNAc...) asparagine glycan. 2 cysteine pairs are disulfide-bonded: C30/C118 and C54/C136. Positions 135-229 (ACFVGKKMAN…TDEIQQQILS (95 aa)) are excised as a propeptide. N144 carries N-linked (GlcNAc...) asparagine glycosylation. 3 cysteine pairs are disulfide-bonded: C254-C297, C290-C330, and C320-C336. C257 is an active-site residue. Residue N275 is glycosylated (N-linked (GlcNAc...) asparagine). Residues F301 and Y303 each contribute to the chloride site. Residue Y346 participates in chloride binding. Residues H404 and N426 contribute to the active site.

This sequence belongs to the peptidase C1 family. Tetramer of heterotrimers consisting of exclusion domain, heavy- and light chains. It depends on chloride as a cofactor. In terms of tissue distribution, broadly distributed, but higher levels found in liver, spleen, intestine, lung and kidney.

It localises to the lysosome. The catalysed reaction is Release of an N-terminal dipeptide, Xaa-Yaa-|-Zaa-, except when Xaa is Arg or Lys, or Yaa or Zaa is Pro.. In terms of biological role, thiol protease. Has dipeptidylpeptidase activity. Active against a broad range of dipeptide substrates composed of both polar and hydrophobic amino acids. Proline cannot occupy the P1 position and arginine cannot occupy the P2 position of the substrate. Can act as both an exopeptidase and endopeptidase. Activates serine proteases such as elastase, cathepsin G and granzymes A and B. This chain is Dipeptidyl peptidase 1 (Ctsc), found in Rattus norvegicus (Rat).